We begin with the raw amino-acid sequence, 174 residues long: Nucleoside-triphosphatase THEP1 (174 aa).

Residues 7–14 (GRPGSGKS) and 98–105 (CIIIDEIG) contribute to the ATP site.

It belongs to the THEP1 NTPase family.

The catalysed reaction is a ribonucleoside 5'-triphosphate + H2O = a ribonucleoside 5'-diphosphate + phosphate + H(+). In terms of biological role, has nucleotide phosphatase activity towards ATP, GTP, CTP, TTP and UTP. May hydrolyze nucleoside diphosphates with lower efficiency. The chain is Nucleoside-triphosphatase THEP1 from Methanothermobacter thermautotrophicus (strain ATCC 29096 / DSM 1053 / JCM 10044 / NBRC 100330 / Delta H) (Methanobacterium thermoautotrophicum).